A 241-amino-acid polypeptide reads, in one-letter code: 2-heptyl-1-hydroxyquinolin-4(1H)-one methyltransferase (241 aa).

It belongs to the methyltransferase superfamily. As to quaternary structure, monomer.

It localises to the cytoplasm. It catalyses the reaction 2-heptyl-1-hydroxy-4(1H)-quinolinone + S-adenosyl-L-methionine = 2-heptyl-1-methoxy-4(1H)-quinolinone + S-adenosyl-L-homocysteine + H(+). Involved in cellular response to chemical stress and may contribute to resistance toward antimicrobial natural compounds as well as drugs. Catalyzes the methylation and detoxification of the P.aeruginosa toxin 2-heptyl-1-hydroxy-4(1H)-quinolinone (HQNO) to 2-heptyl-1-methoxy-4(1H)-quinolinone (HMOQ). This chain is 2-heptyl-1-hydroxyquinolin-4(1H)-one methyltransferase, found in Mycobacterium bovis (strain BCG / Pasteur 1173P2).